Consider the following 200-residue polypeptide: Small ribosomal subunit protein uS4 (200 aa).

Residues 22 to 42 are disordered; sequence TGKELQKRPYPPGQHGPGQRR. The S4 RNA-binding domain maps to 92–152; the sequence is SRLDNLVYRL…EKSRNLQVIK (61 aa).

Belongs to the universal ribosomal protein uS4 family. As to quaternary structure, part of the 30S ribosomal subunit. Contacts protein S5. The interaction surface between S4 and S5 is involved in control of translational fidelity.

In terms of biological role, one of the primary rRNA binding proteins, it binds directly to 16S rRNA where it nucleates assembly of the body of the 30S subunit. With S5 and S12 plays an important role in translational accuracy. The chain is Small ribosomal subunit protein uS4 from Geobacillus kaustophilus (strain HTA426).